Consider the following 52-residue polypeptide: Histone H2A (52 aa).

A disordered region spans residues 1–25 (MSGRGKTGGKARAKAKTRSSRAGLQ). S2 bears the N-acetylserine mark. S2 carries the post-translational modification Phosphoserine. K6 is modified (N6-(2-hydroxyisobutyryl)lysine). K6 carries the N6-acetyllysine modification. Residues 7–19 (TGGKARAKAKTRS) show a composition bias toward basic residues. K10 is modified (N6-(2-hydroxyisobutyryl)lysine; alternate). An N6-lactoyllysine; alternate modification is found at K10. Residue K10 is modified to N6-succinyllysine. Glycyl lysine isopeptide (Lys-Gly) (interchain with G-Cter in ubiquitin) cross-links involve residues K14 and K16. K37 carries the post-translational modification N6-(2-hydroxyisobutyryl)lysine; alternate.

As to quaternary structure, the nucleosome is a histone octamer containing two molecules each of H2A, H2B, H3 and H4 assembled in one H3-H4 heterotetramer and two H2A-H2B heterodimers. The octamer wraps approximately 147 bp of DNA. In terms of processing, acetylation is not necessary for the antibacterial activity. Monoubiquitination in C-terminus gives a specific tag for epigenetic transcriptional repression. Following DNA double-strand breaks (DSBs), it is ubiquitinated through 'Lys-63' linkage of ubiquitin moieties, leading to the recruitment of repair proteins to sites of DNA damage. H2AK119Ub and ionizing radiation-induced 'Lys-63'-linked ubiquitination are distinct events. Post-translationally, phosphorylation on Ser-2 is enhanced during mitosis. Phosphorylation on Ser-2 directly represses transcription.

It is found in the nucleus. Its subcellular location is the chromosome. It localises to the secreted. Core component of nucleosome. Nucleosomes wrap and compact DNA into chromatin, limiting DNA accessibility to the cellular machineries which require DNA as a template. Histones thereby play a central role in transcription regulation, DNA repair, DNA replication and chromosomal stability. DNA accessibility is regulated via a complex set of post-translational modifications of histones, also called histone code, and nucleosome remodeling. Its function is as follows. Hipposin shows strong antimicrobial activity against several Gram-positive and Gram-negative bacteria. The polypeptide is Histone H2A (Hippoglossus hippoglossus (Atlantic halibut)).